A 148-amino-acid chain; its full sequence is SsrA-binding protein (148 aa).

The disordered stretch occupies residues 124–148 (QFDKRETEKDRDWQREKARLMREKA).

The protein belongs to the SmpB family.

It localises to the cytoplasm. Required for rescue of stalled ribosomes mediated by trans-translation. Binds to transfer-messenger RNA (tmRNA), required for stable association of tmRNA with ribosomes. tmRNA and SmpB together mimic tRNA shape, replacing the anticodon stem-loop with SmpB. tmRNA is encoded by the ssrA gene; the 2 termini fold to resemble tRNA(Ala) and it encodes a 'tag peptide', a short internal open reading frame. During trans-translation Ala-aminoacylated tmRNA acts like a tRNA, entering the A-site of stalled ribosomes, displacing the stalled mRNA. The ribosome then switches to translate the ORF on the tmRNA; the nascent peptide is terminated with the 'tag peptide' encoded by the tmRNA and targeted for degradation. The ribosome is freed to recommence translation, which seems to be the essential function of trans-translation. The protein is SsrA-binding protein of Ralstonia pickettii (strain 12J).